Reading from the N-terminus, the 391-residue chain is Elongation factor Tu (391 aa).

The tr-type G domain occupies 10-201; it reads KPHVNIGTVG…AVDEYIPTPE (192 aa). Residues 19–26 form a G1 region; sequence GHVDHGKT. Residue 19-26 participates in GTP binding; it reads GHVDHGKT. Thr26 lines the Mg(2+) pocket. Residues 55–59 form a G2 region; that stretch reads GITIS. The tract at residues 76 to 79 is G3; that stretch reads DCPG. Residues 76–80 and 131–134 each bind GTP; these read DCPGH and NKVD. A G4 region spans residues 131–134; that stretch reads NKVD. The segment at 169–171 is G5; that stretch reads SAL.

This sequence belongs to the TRAFAC class translation factor GTPase superfamily. Classic translation factor GTPase family. EF-Tu/EF-1A subfamily. Monomer.

Its subcellular location is the cytoplasm. It catalyses the reaction GTP + H2O = GDP + phosphate + H(+). Its function is as follows. GTP hydrolase that promotes the GTP-dependent binding of aminoacyl-tRNA to the A-site of ribosomes during protein biosynthesis. This is Elongation factor Tu from Ruegeria sp. (strain TM1040) (Silicibacter sp.).